The chain runs to 358 residues: Probable D-xylulose reductase A (358 aa).

Positions 47, 72, and 73 each coordinate Zn(2+). An NAD(+)-binding site is contributed by 182–187; that stretch reads GAGPVG.

This sequence belongs to the zinc-containing alcohol dehydrogenase family. It depends on Zn(2+) as a cofactor.

It carries out the reaction xylitol + NAD(+) = D-xylulose + NADH + H(+). It participates in carbohydrate degradation; L-arabinose degradation via L-arabinitol; D-xylulose 5-phosphate from L-arabinose (fungal route): step 4/5. Xylitol dehydrogenase which catalyzes the conversion of xylitol to D-xylulose. Xylose is a major component of hemicelluloses such as xylan. Most fungi utilize D-xylose via three enzymatic reactions, xylose reductase (XR), xylitol dehydrogenase (XDH), and xylulokinase, to form xylulose 5-phosphate, which enters pentose phosphate pathway. The sequence is that of Probable D-xylulose reductase A (xdhA) from Aspergillus fumigatus (strain CBS 144.89 / FGSC A1163 / CEA10) (Neosartorya fumigata).